Here is a 436-residue protein sequence, read N- to C-terminus: MEIIRGFAPAEKRLSRRDKAGFFLDETQRAELAKRLGVDPEKAVNGIIDDIRKQGDKAVLEYTLKFDRAAISKLEVSPAEIKQAAGEIPAELFEALKLAATQVRAYHHFQKEAVWKAAEIMQGKQLIRPLERVGLYVPGGKAFYPSTVLMTAIPAKEAGVDEIILVTPPGADGKIPAPTLAAAYIAGVDKVFACGGAQAVAALAFGTKSIPKVDKICGPGNIFVTLAKKAVFGVVDIDGLQGPSEVLILADQYANAEYCASDILAQAEHDVLASPIMVTTSAELAKRVNDIVETKAGSCARKDIIRQSLRDNGLIAVVDNMDEAIKLANMYATEHLCLLVKDSEQYLSRINHAGCIFYGEKASVVMGDYVAGPSHALPTSGTARFSSPLNILDFVKYIDIVNVSKEEVTKLGKAAVTIARAEGLECHAEAALKRME.

NAD(+)-binding residues include Tyr-136, Gln-198, and Asn-221. Substrate contacts are provided by Ser-244, Gln-266, and His-269. Residues Gln-266 and His-269 each coordinate Zn(2+). Catalysis depends on proton acceptor residues Glu-334 and His-335. The substrate site is built by His-335, Asp-368, Glu-422, and His-427. Residue Asp-368 participates in Zn(2+) binding. His-427 is a Zn(2+) binding site.

It belongs to the histidinol dehydrogenase family. Zn(2+) is required as a cofactor.

The catalysed reaction is L-histidinol + 2 NAD(+) + H2O = L-histidine + 2 NADH + 3 H(+). The protein operates within amino-acid biosynthesis; L-histidine biosynthesis; L-histidine from 5-phospho-alpha-D-ribose 1-diphosphate: step 9/9. In terms of biological role, catalyzes the sequential NAD-dependent oxidations of L-histidinol to L-histidinaldehyde and then to L-histidine. The polypeptide is Histidinol dehydrogenase (Dehalococcoides mccartyi (strain ATCC BAA-2266 / KCTC 15142 / 195) (Dehalococcoides ethenogenes (strain 195))).